Reading from the N-terminus, the 415-residue chain is Pectin acetylesterase 12 (415 aa).

A signal peptide spans 1–20 (MVKLLLVGFVVAGIILGTQA). N-linked (GlcNAc...) asparagine glycosylation occurs at Asn-27. Catalysis depends on charge relay system residues Ser-197, Asp-293, and His-360.

Belongs to the pectinacetylesterase family.

It is found in the secreted. Its subcellular location is the cell wall. Functionally, hydrolyzes acetyl esters in homogalacturonan regions of pectin. In type I primary cell wall, galacturonic acid residues of pectin can be acetylated at the O-2 and O-3 positions. Decreasing the degree of acetylation of pectin gels in vitro alters their physical properties. The chain is Pectin acetylesterase 12 from Arabidopsis thaliana (Mouse-ear cress).